A 135-amino-acid polypeptide reads, in one-letter code: Histone H3 type 2 (135 aa).

Residues 1-40 (MARTKQTARKSTGGKAPRKQLATKAARKTPATGGVKKPHR) form a disordered region. K5 is subject to N6-methyllysine. K10 bears the N6-acetyllysine; alternate mark. K10 is subject to N6-methyllysine; alternate. S11 bears the Phosphoserine mark. Phosphothreonine is present on T12. K15, K19, and K24 each carry N6-acetyllysine. An N6-acetyllysine; alternate modification is found at K28. N6-methyllysine; alternate is present on K28. 2 positions are modified to N6-methyllysine: K36 and K37.

It belongs to the histone H3 family. In terms of assembly, the nucleosome is a histone octamer containing two molecules each of H2A, H2B, H3 and H4 assembled in one H3-H4 heterotetramer and two H2A-H2B heterodimers. The octamer wraps approximately 147 bp of DNA. In terms of processing, acetylation is generally linked to gene activation. Acetylated to form H3K9ac (11%), H3K14ac (17%), H3K18ac (11%), H3K23ac (16%) and H3K27ac (7%). H3K4, H3K35 and H3K36 are not acetylated. H3K4me prevents acetylation. 32% of the histone H3 are acetylated with, on average, 2.4 acetyl-Lys. They are all continuously deacatylated and re-acetylated with a half-life of approximately 2 minutes. Post-translationally, monomethylated to form H3K4me1 (81%), H3K9me1 (16%), H3K27me1 (25%), H3K35me1 (25%) and H3K36me1 (5%). No methylation at H3K14, H3K18 and H3K23. Methylated by a protein complex that includes Mut11. Set1 methylates specifically H3K4. H3K4me1 is associated with silenced euchromatin. Set3 forms H3K9me1, while H3K9me2 is undetected. H3K9me1 is specifically associated with silent, multi-copy transgenes. No phosphorylation detected.

Its subcellular location is the nucleus. It localises to the chromosome. Functionally, core component of nucleosome. Nucleosomes wrap and compact DNA into chromatin, limiting DNA accessibility to the cellular machineries which require DNA as a template. Histones thereby play a central role in transcription regulation, DNA repair, DNA replication and chromosomal stability. DNA accessibility is regulated via a complex set of post-translational modifications of histones, also called histone code, and nucleosome remodeling. This is Histone H3 type 2 (ch3-II) from Chlamydomonas reinhardtii (Chlamydomonas smithii).